The sequence spans 360 residues: Histidinol-phosphate aminotransferase (360 aa).

K218 carries the post-translational modification N6-(pyridoxal phosphate)lysine.

Belongs to the class-II pyridoxal-phosphate-dependent aminotransferase family. Histidinol-phosphate aminotransferase subfamily. In terms of assembly, homodimer. Pyridoxal 5'-phosphate is required as a cofactor.

The enzyme catalyses L-histidinol phosphate + 2-oxoglutarate = 3-(imidazol-4-yl)-2-oxopropyl phosphate + L-glutamate. The protein operates within amino-acid biosynthesis; L-histidine biosynthesis; L-histidine from 5-phospho-alpha-D-ribose 1-diphosphate: step 7/9. This is Histidinol-phosphate aminotransferase from Chlorobium phaeovibrioides (strain DSM 265 / 1930) (Prosthecochloris vibrioformis (strain DSM 265)).